The primary structure comprises 501 residues: Acetylcholine receptor subunit beta (501 aa).

An N-terminal signal peptide occupies residues 1–23 (MALGALLLLLGVLGTPLAPGARG). The Extracellular segment spans residues 24–244 (SEAEGQLIKK…VIFYLIIRRK (221 aa)). C151 and C165 are joined by a disulfide. N164 is a glycosylation site (N-linked (GlcNAc...) asparagine). Helical transmembrane passes span 245–269 (PLFY…VFYL), 277–295 (MGLS…LLLA), and 311–332 (YLMF…VLNL). Residues 333–469 (HHRSPHTHQM…WQFVAMVVDR (137 aa)) are Cytoplasmic-facing. The disordered stretch occupies residues 362 to 382 (RPKPERDQLPEPHHSLSPRSG). The segment covering 363 to 375 (PKPERDQLPEPHH) has biased composition (basic and acidic residues). Y390 bears the Phosphotyrosine; by Tyr-kinases mark. The helical transmembrane segment at 470 to 488 (LFLWTFIVFTSVGTLVIFL) threads the bilayer.

It belongs to the ligand-gated ion channel (TC 1.A.9) family. Acetylcholine receptor (TC 1.A.9.1) subfamily. Beta-1/CHRNB1 sub-subfamily. As to quaternary structure, pentamer of two alpha chains, and one each of the beta, delta, and gamma (in immature muscle) or epsilon (in mature muscle) chains. The muscle heteropentamer composed of alpha-1, beta-1, delta, epsilon subunits interacts with the alpha-conotoxin ImII.

The protein resides in the postsynaptic cell membrane. Its subcellular location is the cell membrane. The catalysed reaction is K(+)(in) = K(+)(out). It carries out the reaction Na(+)(in) = Na(+)(out). After binding acetylcholine, the AChR responds by an extensive change in conformation that affects all subunits and leads to opening of an ion-conducting channel across the plasma membrane. In Mus musculus (Mouse), this protein is Acetylcholine receptor subunit beta (Chrnb1).